Reading from the N-terminus, the 176-residue chain is Scytalone dehydratase-like protein AacuK (176 aa).

Tyrosine 26 and tyrosine 46 together coordinate substrate. Active-site residues include histidine 81 and histidine 107.

Belongs to the scytalone dehydratase family.

It participates in secondary metabolite biosynthesis. In terms of biological role, scytalone dehydratase-like protein; part of the gene cluster that mediates the biosynthesis of the tetrahydroxanthone dimer secalonic acid D. The pathway begins with the synthesis of atrochrysone thioester by the polyketide synthase AacuL. The atrochrysone carboxyl ACP thioesterase AacuM then breaks the thioester bond and releases the atrochrysone carboxylic acid from AacuL. Atrochrysone carboxylic acid is decarboxylated by the decarboxylase AacuI, and oxidized by the anthrone oxygenase AacuG to yield emodin. Emodin is then reduced to emodin hydroquinone by a yet unidentified oxidoreductase. A-ring reduction by the short chain dehydrogenase AacuN, dehydration by the scytalone dehydratase-like protein AacuK and probable spontaneous re-oxidation, results in overall deoxygenation to chrysophanol. Baeyer-Villiger oxidation by the Baeyer-Villiger monooxygenase (BVMO) AacuH then yields monodictyphenone. Monodictyphenone is transformed into compounds with the tetrahydroxanthone skeleton via methylesterification by the methyltransferase AacuQ, followed by the action of the flavin-dependent monooxygenase AacuC, the isomerase AacuP, and the short chain dehydrogenase/reductase AacuF or AacuD. AacuF and AacuD should accept the same compound as a substrate but perform the ketoreduction with a different stereoselectivity, thus yielding blennolides B and A, respectively. In the final step of the biosynthesis, the cytochrome P450 monooxygenase AacuE accepts blennolide B and/or blennolide A to conduct the dimerization reaction to furnish the tetrahydroxanthone dimers, secalonic acids D, B, and F. This Aspergillus aculeatus (strain ATCC 16872 / CBS 172.66 / WB 5094) protein is Scytalone dehydratase-like protein AacuK.